The following is a 625-amino-acid chain: RalA-binding protein 1 (625 aa).

2 stretches are compositionally biased toward basic and acidic residues: residues 1–11 (MDFDSPEEKEF) and 20–60 (ADAK…KDRG). A disordered region spans residues 1-172 (MDFDSPEEKE…SKQLSQQQDD (172 aa)). 2 positions are modified to phosphoserine: S68 and S69. Basic and acidic residues predominate over residues 94–157 (KSKEKREKSR…EKDKKADKKD (64 aa)). Residues 191–385 (VSLATERSRC…PLTSTSPKLP (195 aa)) form the Rho-GAP domain. The tract at residues 443–500 (QEKTAEEVDNSSSAPPAVASEDTTDSKPAGTPAVSTNNSISQEEPKTDTLTPKDAPND) is disordered. Polar residues predominate over residues 475–484 (AVSTNNSISQ).

Interacts with CycB and numb.

Participates in receptor endocytosis during interphase, is also involved in mitotic processes when endocytosis is switched off. The sequence is that of RalA-binding protein 1 from Drosophila melanogaster (Fruit fly).